An 858-amino-acid chain; its full sequence is MVNFTVDQIRAIMDKKANIRNMSVIAHVDHGKSTLTDSLVCKAGIIASARAGETRFTDTRKDEQERCITIKSTAISLFYELSENDLNFIKQSKDGSGFLINLIDSPGHVDFSSEVTAALRVTDGALVVVDCVSGVCVQTETVLRQAIAERIKPVLMMNKMDRALLELQLEPEELYQTFQRIVENVNVIISTYGEGESGPMGNIMIDPVLGTVGFGSGLHGWAFTLKQFAEMYVAKFAAKGEGQLGPAERAKKVEDMMKKLWGDRYFDPATGKFSKSANSPDGKKLPRTFCQLILDPIFKVFDAIMNFKKEETAKLIEKLDIKLDSEDKDKEGKPLLKAVMRRWLPAGDALLQMITIHLPSPVTAQKYRCELLYEGPPDDEAAMGIKSCDPKGPLMMYISKMVPTSDKGRFYAFGRVFSGLVSTGLKVRIMGPNYTPGKKEDLYLKPIQRTILMMGRYVEPIEDVPCGNIVGLVGVDQFLVKTGTITTFEHAHNMRVMKFSVSPVVRVAVEAKNPADLPKLVEGLKRLAKSDPMVQCIIEESGEHIIAGAGELHLEICLKDLEEDHACIPIKKSDPVVSYRETVSEESNVLCLSKSPNKHNRLYMKARPFPDGLAEDIDKGEVSARQELKQRARYLAEKYEWDVAEARKIWCFGPDGTGPNILTDITKGVQYLNEIKDSVVAGFQWATKEGALCEENMRGVRFDVHDVTLHADAIHRGGGQIIPTARRCLYASVLTAQPRLMEPIYLVEIQCPEQVVGGIYGVLNRKRGHVFEETQVAGTPMFVVKAYLPVNESFGFTADLRSNTGGQAFPQCVFDHWQILPGDPFDNTSRPSQVVAETRKRKGLKEGIPALDNFLDKL.

Positions 17–362 (ANIRNMSVIA…MITIHLPSPV (346 aa)) constitute a tr-type G domain. 26-33 (AHVDHGKS) provides a ligand contact to GTP. Residue Thr54 is modified to Phosphothreonine. Thr57 carries the post-translational modification Phosphothreonine; by EEF2K. Residue Thr59 is modified to Phosphothreonine. N6-succinyllysine is present on Lys152. Residues 158 to 161 (NKMD) and 216 to 218 (SGL) each bind GTP. The residue at position 235 (Lys235) is an N6-acetyllysine. Lys239 is modified (N6-acetyllysine; alternate). A Glycyl lysine isopeptide (Lys-Gly) (interchain with G-Cter in SUMO1); alternate cross-link involves residue Lys239. Residue Tyr265 is modified to Phosphotyrosine; by CSK. An N6-acetyllysine; alternate modification is found at Lys272. At Lys272 the chain carries N6-succinyllysine; alternate. Lys275 is modified (N6-acetyllysine). Residue Lys322 forms a Glycyl lysine isopeptide (Lys-Gly) (interchain with G-Cter in SUMO) linkage. Ser325 is subject to Phosphoserine. At Tyr373 the chain carries Phosphotyrosine; by CSK. The residue at position 435 (Thr435) is a Phosphothreonine. Lys439 and Lys445 each carry N6-acetyllysine. Ser502 is modified (phosphoserine). Lys525 is subject to N6,N6,N6-trimethyllysine; by EEF2KMT. Lys529 participates in a covalent cross-link: Glycyl lysine isopeptide (Lys-Gly) (interchain with G-Cter in SUMO). Lys572 is subject to N6-succinyllysine. A Phosphoserine; by CDK2 modification is found at Ser595. The residue at position 619 (Lys619) is an N6-acetyllysine. His715 bears the Diphthamide mark.

This sequence belongs to the TRAFAC class translation factor GTPase superfamily. Classic translation factor GTPase family. EF-G/EF-2 subfamily. As to quaternary structure, binds to 80S ribosomes. Actively translating ribosomes show mutually exclusive binding of eIF5a (EIF5A or EIF5A2) and EEF2/eEF2. Interacts with SERBP1; interaction sequesters EEF2/eEF2 at the A-site of the ribosome, thereby blocking the interaction sites of the mRNA-tRNA complex, promoting ribosome stabilization and hibernation. Interacts with HABP4; interaction takes place at the A-site of hibernating ribosomes and promotes ribosome stabilization. Component of the mRNA surveillance SURF complex, at least composed of ERF1, ERF3 (ERF3A or ERF3B), EEF2, UPF1/RENT1, SMG1, SMG8 and SMG9. Interacts with RBPMS2. In terms of processing, phosphorylation by EF-2 kinase completely inactivates EF-2; it requires prior phosphorylation by CDK2 at Ser-595 during mitotic prometaphase. Phosphorylation by CSK promotes SUMOylation, proteolytic cleavage, and nuclear translocation if the C-terminal fragment. Post-translationally, diphthamide is 2-[3-carboxyamido-3-(trimethyl-ammonio)propyl]histidine. ISGylated. In terms of processing, proteolytically processed at two sites following phosphorylation by CSK. Post-translationally, SUMOylated following phosphorylation by CSK, promotes proteolytic cleavage.

Its subcellular location is the cytoplasm. The protein localises to the nucleus. The enzyme catalyses GTP + H2O = GDP + phosphate + H(+). Catalyzes the GTP-dependent ribosomal translocation step during translation elongation. During this step, the ribosome changes from the pre-translocational (PRE) to the post-translocational (POST) state as the newly formed A-site-bound peptidyl-tRNA and P-site-bound deacylated tRNA move to the P and E sites, respectively. Catalyzes the coordinated movement of the two tRNA molecules, the mRNA and conformational changes in the ribosome. The protein is Elongation factor 2 (EEF2) of Bos taurus (Bovine).